We begin with the raw amino-acid sequence, 292 residues long: Elongation factor Ts (292 aa).

Residues 82-85 are involved in Mg(2+) ion dislocation from EF-Tu; it reads TDFV.

Belongs to the EF-Ts family.

The protein resides in the cytoplasm. Functionally, associates with the EF-Tu.GDP complex and induces the exchange of GDP to GTP. It remains bound to the aminoacyl-tRNA.EF-Tu.GTP complex up to the GTP hydrolysis stage on the ribosome. The sequence is that of Elongation factor Ts from Legionella pneumophila (strain Lens).